The primary structure comprises 247 residues: Carboxy-S-adenosyl-L-methionine synthase (247 aa).

Residues Y39, 64–66, 89–90, 117–118, N132, and R199 each bind S-adenosyl-L-methionine; these read GCS, DN, and DI.

Belongs to the class I-like SAM-binding methyltransferase superfamily. Cx-SAM synthase family. Homodimer.

The enzyme catalyses prephenate + S-adenosyl-L-methionine = carboxy-S-adenosyl-L-methionine + 3-phenylpyruvate + H2O. In terms of biological role, catalyzes the conversion of S-adenosyl-L-methionine (SAM) to carboxy-S-adenosyl-L-methionine (Cx-SAM). This is Carboxy-S-adenosyl-L-methionine synthase from Salmonella enteritidis PT4 (strain P125109).